The following is a 264-amino-acid chain: Hemin import ATP-binding protein HmuV (264 aa).

Residues 2-241 (IEVSGLSVRL…ATMLSVFGCA (240 aa)) form the ABC transporter domain. 34 to 41 (GPNGSGKT) contacts ATP.

The protein belongs to the ABC transporter superfamily. Heme (hemin) importer (TC 3.A.1.14.5) family. The complex is composed of two ATP-binding proteins (HmuV), two transmembrane proteins (HmuU) and a solute-binding protein (HmuT).

Its subcellular location is the cell inner membrane. Its function is as follows. Part of the ABC transporter complex HmuTUV involved in hemin import. Responsible for energy coupling to the transport system. This chain is Hemin import ATP-binding protein HmuV, found in Rhizobium etli (strain ATCC 51251 / DSM 11541 / JCM 21823 / NBRC 15573 / CFN 42).